A 134-amino-acid polypeptide reads, in one-letter code: Transcription antitermination protein NusB (134 aa).

It belongs to the NusB family.

Its function is as follows. Involved in transcription antitermination. Required for transcription of ribosomal RNA (rRNA) genes. Binds specifically to the boxA antiterminator sequence of the ribosomal RNA (rrn) operons. The polypeptide is Transcription antitermination protein NusB (Shewanella frigidimarina (strain NCIMB 400)).